Here is a 357-residue protein sequence, read N- to C-terminus: Guanine nucleotide-binding protein alpha-1 subunit (357 aa).

A lipid anchor (N-myristoyl glycine) is attached at Gly-2. Residue Cys-4 is the site of S-palmitoyl cysteine attachment. Residues 32 to 357 (NIIKLLLLGA…STKLKGCGLY (326 aa)) form the G-alpha domain. Positions 35–48 (KLLLLGAGESGKST) are G1 motif. 14 residues coordinate GTP: Glu-43, Ser-44, Gly-45, Lys-46, Ser-47, Thr-48, Asp-151, Leu-176, Thr-182, Gly-204, Asn-270, Lys-271, Asp-273, and Ala-329. Ser-47 lines the Mg(2+) pocket. Positions 174–182 (DILHTRVPT) are G2 motif. Thr-182 contributes to the Mg(2+) binding site. Residues 197-206 (FRVFDVGGQR) form a G3 motif region. The G4 motif stretch occupies residues 266-273 (ILFLNKID). The segment at 327–332 (TCATDT) is G5 motif.

This sequence belongs to the G-alpha family. In terms of assembly, g proteins are composed of 3 units; alpha, beta and gamma. The alpha chain contains the guanine nucleotide binding site. It depends on Mg(2+) as a cofactor.

Guanine nucleotide-binding proteins (G proteins) are involved as modulators or transducers in various transmembrane signaling systems. This Caenorhabditis elegans protein is Guanine nucleotide-binding protein alpha-1 subunit (gpa-1).